A 178-amino-acid chain; its full sequence is MDLKNLTQEERSELSLIDVAHFILEQRKETILFPELVKEIQAFLGLKDAEIRERLVQFYTDMNIDGNFISLGNNTWGLRAWYPMDAIDEEVQTQTTPKKKRKSDDDEDEDEEILDDDVDYDDEEIVEELGEEEISLADVLLDEDEDDDDHLPDGIEGDLATVEDDYTDGDYTEDPEDK.

One can recognise an HTH HARE-type domain in the interval 14–81; it reads LSLIDVAHFI…GNNTWGLRAW (68 aa). 2 disordered regions span residues 88-122 and 141-178; these read DEEVQTQTTPKKKRKSDDDEDEDEEILDDDVDYDD and LDEDEDDDDHLPDGIEGDLATVEDDYTDGDYTEDPEDK. Composition is skewed to acidic residues over residues 105–122, 141–150, and 161–178; these read DDEDEDEEILDDDVDYDD, LDEDEDDDDH, and TVEDDYTDGDYTEDPEDK.

Belongs to the RpoE family. As to quaternary structure, RNAP is composed of a core of 2 alpha, a beta and a beta' subunits. The core is associated with a delta subunit and one of several sigma factors.

Functionally, participates in both the initiation and recycling phases of transcription. In the presence of the delta subunit, RNAP displays an increased specificity of transcription, a decreased affinity for nucleic acids, and an increased efficiency of RNA synthesis because of enhanced recycling. The sequence is that of Probable DNA-directed RNA polymerase subunit delta from Listeria monocytogenes serovar 1/2a (strain ATCC BAA-679 / EGD-e).